A 365-amino-acid polypeptide reads, in one-letter code: UDP-N-acetylglucosamine--N-acetylmuramyl-(pentapeptide) pyrophosphoryl-undecaprenol N-acetylglucosamine transferase (365 aa).

Residues 13–15 (TGG), Asn-125, Arg-165, Ser-192, and Gln-293 contribute to the UDP-N-acetyl-alpha-D-glucosamine site.

The protein belongs to the glycosyltransferase 28 family. MurG subfamily.

The protein localises to the cell inner membrane. It carries out the reaction di-trans,octa-cis-undecaprenyl diphospho-N-acetyl-alpha-D-muramoyl-L-alanyl-D-glutamyl-meso-2,6-diaminopimeloyl-D-alanyl-D-alanine + UDP-N-acetyl-alpha-D-glucosamine = di-trans,octa-cis-undecaprenyl diphospho-[N-acetyl-alpha-D-glucosaminyl-(1-&gt;4)]-N-acetyl-alpha-D-muramoyl-L-alanyl-D-glutamyl-meso-2,6-diaminopimeloyl-D-alanyl-D-alanine + UDP + H(+). The protein operates within cell wall biogenesis; peptidoglycan biosynthesis. Its function is as follows. Cell wall formation. Catalyzes the transfer of a GlcNAc subunit on undecaprenyl-pyrophosphoryl-MurNAc-pentapeptide (lipid intermediate I) to form undecaprenyl-pyrophosphoryl-MurNAc-(pentapeptide)GlcNAc (lipid intermediate II). This chain is UDP-N-acetylglucosamine--N-acetylmuramyl-(pentapeptide) pyrophosphoryl-undecaprenol N-acetylglucosamine transferase, found in Ruegeria sp. (strain TM1040) (Silicibacter sp.).